A 258-amino-acid polypeptide reads, in one-letter code: Large ribosomal subunit protein bL19m (258 aa).

The tract at residues 235-258 (SKGLTGGVGGGGGKQKGQESKKKN) is disordered. The span at 238–249 (LTGGVGGGGGKQ) shows a compositional bias: gly residues.

The protein belongs to the bacterial ribosomal protein bL19 family. Component of the mitochondrial large ribosomal subunit (mt-LSU). Mature N.crassa 74S mitochondrial ribosomes consist of a small (37S) and a large (54S) subunit. The 37S small subunit contains a 16S ribosomal RNA (16S mt-rRNA) and 32 different proteins. The 54S large subunit contains a 23S rRNA (23S mt-rRNA) and 42 different proteins.

It is found in the mitochondrion. Component of the mitochondrial ribosome (mitoribosome), a dedicated translation machinery responsible for the synthesis of mitochondrial genome-encoded proteins, including at least some of the essential transmembrane subunits of the mitochondrial respiratory chain. The mitoribosomes are attached to the mitochondrial inner membrane and translation products are cotranslationally integrated into the membrane. The protein is Large ribosomal subunit protein bL19m (img1) of Neurospora crassa (strain ATCC 24698 / 74-OR23-1A / CBS 708.71 / DSM 1257 / FGSC 987).